Reading from the N-terminus, the 516-residue chain is D-aminopeptidase (516 aa).

The active-site Nucleophile is the serine 61. Lysine 64 acts as the Proton donor/acceptor in catalysis. Positions 476–486 are important for specificity; that stretch reads RRSMDAPAPGD. Substrate is bound at residue aspartate 480.

Belongs to the peptidase S12 family. In terms of assembly, homodimer.

It carries out the reaction Release of an N-terminal D-amino acid from a peptide, Xaa-|-Yaa-, in which Xaa is preferably D-Ala, D-Ser or D-Thr. D-amino acid amides and methyl esters also are hydrolyzed, as is glycine amide.. With respect to regulation, inhibited by beta-lactam compounds such as 6-aminopenicillic acid, 7-aminocephalosporanic acid, benzylpenicillin and ampicillin. Inhibited by p-chloromercuribenzoate. In terms of biological role, hydrolyzes N-terminal residues in D-amino acid-containing peptides. This is D-aminopeptidase from Cereibacter sphaeroides (strain KD131 / KCTC 12085) (Rhodobacter sphaeroides).